The sequence spans 322 residues: MGLPSSLESYLLLILLSFLNVSTIYSSKPSKEEAVLFGGNFPAFYVIGDSLVDPGNNNHLPTMIRANYPPYGSDFEGGKATGRFSNGKTIADYIAIYYKLPLVPAYLGLSDDRKDTISTGMNYASAGCGIRRLTGKIAGKCLSLSKQVDLFEETIEKHLKTNFKTPYELREHLAHSLFMTVIGVNDYAFFYTRLTDANDFADELLHKFLKKIEKLHKLGARKFFINNIKPLGCYPNIVAKTFMLGLRGPSTNRYSSNLLNTTGPCCPLDYDGSLTSSCKRRSKTCKAPDSTHIFFDPRHPTQLANFMYSIACFDERTICHVV.

Positions 1-26 are cleaved as a signal peptide; the sequence is MGLPSSLESYLLLILLSFLNVSTIYS. S50 functions as the Nucleophile in the catalytic mechanism. N-linked (GlcNAc...) asparagine glycosylation occurs at N260. Catalysis depends on residues D296 and H299.

Belongs to the 'GDSL' lipolytic enzyme family.

The protein localises to the secreted. The sequence is that of GDSL esterase/lipase At2g04020 from Arabidopsis thaliana (Mouse-ear cress).